Consider the following 153-residue polypeptide: MPQYNKLQVEAIFGGTVIDHIPAQVGLKLLSLFKWLHTKERITMGLNLPSNQQKKKDLIKLENVLLNEDQANQLSIYAPLATVNQIKNYIVIKKQKLKLPKIINGILSCPNENCISKVELKAADFIVKIKLNKIYLKCKYCERDFDHKIVTKI.

Cys-109, Cys-114, Cys-138, and Cys-141 together coordinate Zn(2+).

This sequence belongs to the PyrI family. In terms of assembly, contains catalytic and regulatory chains. It depends on Zn(2+) as a cofactor.

Its function is as follows. Involved in allosteric regulation of aspartate carbamoyltransferase. In Wigglesworthia glossinidia brevipalpis, this protein is Aspartate carbamoyltransferase regulatory chain.